The primary structure comprises 327 residues: GTPase Obg (327 aa).

One can recognise an Obg domain in the interval 1-159 (MQFIDQANII…WEVQLELKLL (159 aa)). In terms of domain architecture, OBG-type G spans 160–327 (AEVGIIGLPN…SLLSEVWKRI (168 aa)). ATP contacts are provided by residues 166-173 (GLPNAGKS), 191-195 (FTTLI), 213-216 (DIPG), 280-283 (NKME), and 309-311 (SSS). Ser-173 and Thr-193 together coordinate Mg(2+).

This sequence belongs to the TRAFAC class OBG-HflX-like GTPase superfamily. OBG GTPase family. In terms of assembly, monomer. Mg(2+) is required as a cofactor.

The protein localises to the cytoplasm. Functionally, an essential GTPase which binds GTP, GDP and possibly (p)ppGpp with moderate affinity, with high nucleotide exchange rates and a fairly low GTP hydrolysis rate. Plays a role in control of the cell cycle, stress response, ribosome biogenesis and in those bacteria that undergo differentiation, in morphogenesis control. In Prochlorococcus marinus (strain MIT 9215), this protein is GTPase Obg.